The primary structure comprises 147 residues: Hordoindoline-B2 (147 aa).

The signal sequence occupies residues 1–19; it reads MKTLFLLALLALVASTTSA. Residues 20-28 constitute a propeptide that is removed on maturation; the sequence is QYSVGGGYN.

Post-translationally, five disulfide bonds are present. As to expression, found in endosperm and aleurone layer of developing kernels, but not in the embryo.

It localises to the membrane. The protein resides in the secreted. The protein localises to the extracellular space. Its function is as follows. Acts as a membranotoxin, probably through its antibacterial and antifungal activities, contributing to the defense mechanism of the plant against predators. Forms monovalent cation-selective ion channels in membranes. Contributes to grain texture and hardness. The chain is Hordoindoline-B2 (HINB-2) from Hordeum vulgare (Barley).